The following is a 251-amino-acid chain: tRNA-cytidine(32) 2-sulfurtransferase 1 (251 aa).

Positions 33 to 38 (SGGKDS) match the PP-loop motif motif. [4Fe-4S] cluster contacts are provided by cysteine 108, cysteine 111, and cysteine 199.

This sequence belongs to the TtcA family. As to quaternary structure, homodimer. The cofactor is Mg(2+). [4Fe-4S] cluster serves as cofactor.

Its subcellular location is the cytoplasm. The enzyme catalyses cytidine(32) in tRNA + S-sulfanyl-L-cysteinyl-[cysteine desulfurase] + AH2 + ATP = 2-thiocytidine(32) in tRNA + L-cysteinyl-[cysteine desulfurase] + A + AMP + diphosphate + H(+). The protein operates within tRNA modification. In terms of biological role, catalyzes the ATP-dependent 2-thiolation of cytidine in position 32 of tRNA, to form 2-thiocytidine (s(2)C32). The sulfur atoms are provided by the cysteine/cysteine desulfurase (IscS) system. In Francisella tularensis subsp. holarctica (strain FTNF002-00 / FTA), this protein is tRNA-cytidine(32) 2-sulfurtransferase 1.